A 325-amino-acid polypeptide reads, in one-letter code: Elongation factor P--(R)-beta-lysine ligase (325 aa).

76–78 is a binding site for substrate; it reads SPE. ATP contacts are provided by residues 100 to 102 and Asn109; that span reads RNE. Tyr118 provides a ligand contact to substrate. Residue 244–245 participates in ATP binding; that stretch reads EL. Glu251 contacts substrate. Residue Gly300 coordinates ATP.

It belongs to the class-II aminoacyl-tRNA synthetase family. EpmA subfamily. In terms of assembly, homodimer.

The enzyme catalyses D-beta-lysine + L-lysyl-[protein] + ATP = N(6)-((3R)-3,6-diaminohexanoyl)-L-lysyl-[protein] + AMP + diphosphate + H(+). With EpmB is involved in the beta-lysylation step of the post-translational modification of translation elongation factor P (EF-P) on 'Lys-34'. Catalyzes the ATP-dependent activation of (R)-beta-lysine produced by EpmB, forming a lysyl-adenylate, from which the beta-lysyl moiety is then transferred to the epsilon-amino group of EF-P 'Lys-34'. This Salmonella agona (strain SL483) protein is Elongation factor P--(R)-beta-lysine ligase.